Consider the following 425-residue polypeptide: MNLLDQQTLINLLHQEADVAIGCTEPVMVALAAAKTRDMLGTLPRLVDISVSSAVWKNARRVGLPGTGEKGLAMAAAMGLLAPVEAGQRLLAALTPVQVEQAKILVREGVVKVGVVAAKEGLYARAVARSNQHEAIVELNGSHKNFSALWLDGRMAGGAGENLNLKLEALLAQDYQSLLKQVLSLSPEELYFLYQGAEDILTFAREIHQGGRNPLSAMASFFRRTESGGESLEVLIRNLTGIAVAERMAGATYPVLTCAGSGNQGILAAVSLLLAGQELRAGPESVTRALAIAHFTNMYLKAYTGKLSPLCGAVTGGAGVAAAICWLLEGSCQQIINAMQIVLGNLCCVICDGAKESCALKISTAAVEAVRAGYMACQGINLEAGTGIVGKKLEDTMELVRKVYQGGLGEIDYYLGKVDYLLSTN.

This sequence belongs to the UPF0597 family.

In Moorella thermoacetica (strain ATCC 39073 / JCM 9320), this protein is UPF0597 protein Moth_1414.